A 161-amino-acid chain; its full sequence is Immunity protein YezG (161 aa).

Monomer. Interacts with the C-terminus of cognate toxin YeeF, probably with 2:2 stoichiometry. The second YezG molecules binds with lower affinity.

The protein resides in the cytoplasm. In terms of biological role, immunity component of an LXG toxin-immunity module. These modules promote kin selection, mediate competition in biofilms, and drive spatial segregation of different strains, indicating that LXG toxins may help avoid warfare between strains in biofilms. Neutralizes the toxic abilities of cognate toxin YeeF upon expression in E.coli and in vitro. In Bacillus spizizenii (strain ATCC 23059 / NRRL B-14472 / W23) (Bacillus subtilis subsp. spizizenii), this protein is Immunity protein YezG.